A 714-amino-acid chain; its full sequence is Polyribonucleotide nucleotidyltransferase (714 aa).

Positions 489 and 495 each coordinate Mg(2+). The KH domain occupies 556–615; it reads PKIDTIKIDVDKIKVVIGKGGETIDKIIAETGVKIDIDEEGNVSIYSSDQDAINRAKEII. Positions 625–693 constitute an S1 motif domain; the sequence is GEVYHAKVVR…DKGRIDASMK (69 aa). Positions 691–714 are disordered; that stretch reads SMKALVPRPPKPEKSEAKKEGKHD. Basic and acidic residues predominate over residues 700 to 714; the sequence is PKPEKSEAKKEGKHD.

Belongs to the polyribonucleotide nucleotidyltransferase family. Mg(2+) serves as cofactor.

The protein resides in the cytoplasm. The catalysed reaction is RNA(n+1) + phosphate = RNA(n) + a ribonucleoside 5'-diphosphate. Its function is as follows. Involved in mRNA degradation. Catalyzes the phosphorolysis of single-stranded polyribonucleotides processively in the 3'- to 5'-direction. This Streptococcus equi subsp. equi (strain 4047) protein is Polyribonucleotide nucleotidyltransferase.